A 358-amino-acid chain; its full sequence is B3 domain-containing transcription factor NGA3 (358 aa).

A compositionally biased stretch (polar residues) spans 1 to 14 (MDLSLAPTTTTSSD). The interval 1-45 (MDLSLAPTTTTSSDQEQDRDQELTSNIGASSSSGPSGNNNNLPMM) is disordered. The segment covering 25 to 45 (SNIGASSSSGPSGNNNNLPMM) has biased composition (low complexity). A DNA-binding region (TF-B3) is located at residues 56–162 (FDKVVTPSDV…KLYIDWRHRP (107 aa)). The segment at 310-358 (EIGASSSSSSALRLNLSTDHDDDNDDGDDGDDDQFAKKGKSSLSLNFNP) is disordered. The segment covering 329–342 (HDDDNDDGDDGDDD) has biased composition (acidic residues).

It localises to the nucleus. In terms of biological role, regulates lateral organ growth. Functionally redundant with NGA1, NGA2 and NGA4. This chain is B3 domain-containing transcription factor NGA3 (NGA3), found in Arabidopsis thaliana (Mouse-ear cress).